Reading from the N-terminus, the 140-residue chain is L-fucose mutarotase (140 aa).

The active-site Proton donor is His22. Substrate-binding positions include Asp30, Arg107, and 129-131 (YGN).

It belongs to the RbsD / FucU family. FucU mutarotase subfamily. In terms of assembly, homodecamer.

Its subcellular location is the cytoplasm. The enzyme catalyses alpha-L-fucose = beta-L-fucose. The protein operates within carbohydrate metabolism; L-fucose metabolism. Functionally, involved in the anomeric conversion of L-fucose. The polypeptide is L-fucose mutarotase (Salmonella gallinarum (strain 287/91 / NCTC 13346)).